Here is a 158-residue protein sequence, read N- to C-terminus: uncharacterized protein (158 aa).

Disordered regions lie at residues 1–86 (MDFR…DHWW) and 138–158 (ASQV…LLGF). Low complexity predominate over residues 7–76 (SPTTCTTPAS…PTPASSGSAA (70 aa)).

This is an uncharacterized protein from Homo sapiens (Human).